We begin with the raw amino-acid sequence, 274 residues long: Ethanolamine ammonia-lyase small subunit (274 aa).

The adenosylcob(III)alamin site is built by Val161, Glu182, and Cys211.

This sequence belongs to the EutC family. As to quaternary structure, the basic unit is a heterodimer which dimerizes to form tetramers. The heterotetramers trimerize; 6 large subunits form a core ring with 6 small subunits projecting outwards. The cofactor is adenosylcob(III)alamin.

Its subcellular location is the bacterial microcompartment. The catalysed reaction is ethanolamine = acetaldehyde + NH4(+). It functions in the pathway amine and polyamine degradation; ethanolamine degradation. Catalyzes the deamination of various vicinal amino-alcohols to oxo compounds. Allows this organism to utilize ethanolamine as the sole source of nitrogen and carbon in the presence of external vitamin B12. This chain is Ethanolamine ammonia-lyase small subunit, found in Pseudomonas fluorescens (strain Pf0-1).